The following is a 406-amino-acid chain: Homocysteine-responsive endoplasmic reticulum-resident ubiquitin-like domain member 2 protein (406 aa).

Residues 10 to 89 (VTLIIKAPNQ…HMVHLVCTSR (80 aa)) form the Ubiquitin-like domain. The disordered stretch occupies residues 86–156 (CTSRTPPSSP…PQAQTDPAQS (71 aa)). Low complexity-rich tracts occupy residues 87-98 (TSRTPPSSPKSS) and 109-139 (SNSN…SSSE). Over residues 145-156 (TLPQAQTDPAQS) the composition is skewed to polar residues. Residues 302 to 322 (FIMVMGAMLLVYLHQAGWFPF) form a helical membrane-spanning segment.

It is found in the membrane. Functionally, could be involved in the unfolded protein response (UPR) pathway. The chain is Homocysteine-responsive endoplasmic reticulum-resident ubiquitin-like domain member 2 protein (HERPUD2) from Bos taurus (Bovine).